We begin with the raw amino-acid sequence, 436 residues long: Phosphomethylpyrimidine synthase (436 aa).

Substrate contacts are provided by residues N68, M97, Y126, H166, 188–190 (SRG), 229–232 (DGFR), and E268. H272 contributes to the Zn(2+) binding site. Y295 is a substrate binding site. Position 336 (H336) interacts with Zn(2+). The [4Fe-4S] cluster site is built by C412, C415, and C419.

This sequence belongs to the ThiC family. In terms of assembly, homodimer. [4Fe-4S] cluster is required as a cofactor.

The enzyme catalyses 5-amino-1-(5-phospho-beta-D-ribosyl)imidazole + S-adenosyl-L-methionine = 4-amino-2-methyl-5-(phosphooxymethyl)pyrimidine + CO + 5'-deoxyadenosine + formate + L-methionine + 3 H(+). The protein operates within cofactor biosynthesis; thiamine diphosphate biosynthesis. In terms of biological role, catalyzes the synthesis of the hydroxymethylpyrimidine phosphate (HMP-P) moiety of thiamine from aminoimidazole ribotide (AIR) in a radical S-adenosyl-L-methionine (SAM)-dependent reaction. The protein is Phosphomethylpyrimidine synthase of Geobacter metallireducens (strain ATCC 53774 / DSM 7210 / GS-15).